The primary structure comprises 278 residues: Checkpoint protein Hus1-like (278 aa).

Belongs to the HUS1 family. As to quaternary structure, component of the 9-1-1 checkpoint clamp complex consisting of Rad9 isoform A, Rad1 and Hus1-like; the interactions with Rad1 and Rad9 are direct. This complex probably also forms with Rad9 isoform B, however 9-1-1 complex containing Rad9 isoform A localizes to the nuclear periphery. In terms of tissue distribution, expressed in ovary.

It localises to the cytoplasm. The protein resides in the nucleus envelope. In terms of biological role, component of the 9-1-1 checkpoint clamp complex. Involved in both meiotic and somatic DNA damage responses. Essential for activation of the meiotic checkpoint in response to double-strand DNA breaks; required for the S-phase checkpoint but not the G2-M phase checkpoint. Involved in double strand break repair by homologous recombination during meiosis; influences the organization of chromosomal DNA in the meiotic nucleus. The chain is Checkpoint protein Hus1-like from Drosophila melanogaster (Fruit fly).